The sequence spans 303 residues: Probable 5-dehydro-4-deoxyglucarate dehydratase (303 aa).

It belongs to the DapA family.

The enzyme catalyses 5-dehydro-4-deoxy-D-glucarate + H(+) = 2,5-dioxopentanoate + CO2 + H2O. It participates in carbohydrate acid metabolism; D-glucarate degradation; 2,5-dioxopentanoate from D-glucarate: step 2/2. This chain is Probable 5-dehydro-4-deoxyglucarate dehydratase, found in Variovorax paradoxus (strain S110).